The following is a 324-amino-acid chain: Ig gamma-1 chain C region secreted form (324 aa).

Positions 1–97 (AKTTPPSVYP…ASSTKVDKKI (97 aa)) are CH1. The cysteines at positions 27 and 82 are disulfide-linked. The interval 98–110 (VPRDCGCKPCICT) is hinge. Positions 111–217 (VPEVSSVFIF…PIEKTISKTK (107 aa)) are CH2. 2 disulfide bridges follow: Cys138-Cys198 and Cys244-Cys302. Residue Asn174 is glycosylated (N-linked (GlcNAc...) asparagine). Residues 218-324 (GRPKAPQVYT…EKSLSHSPGK (107 aa)) form a CH3 region.

Its subcellular location is the secreted. The chain is Ig gamma-1 chain C region secreted form (Ighg1) from Mus musculus (Mouse).